A 413-amino-acid chain; its full sequence is Multidrug resistance protein MdtA (413 aa).

Residues 1-32 (MNAKRIRGLLIFAAVIAIAVLIWRHFTQTSPA) form the signal peptide. Polar residues predominate over residues 32 to 46 (AAPGTSEQHAARTSH). The interval 32 to 59 (AAPGTSEQHAARTSHSGNNSSGNGGGRR) is disordered.

Belongs to the membrane fusion protein (MFP) (TC 8.A.1) family. In terms of assembly, part of a tripartite efflux system composed of MdtA, MdtB and MdtC.

Its subcellular location is the cell inner membrane. This is Multidrug resistance protein MdtA from Pectobacterium carotovorum subsp. carotovorum (strain PC1).